The following is a 315-amino-acid chain: Acetyl-coenzyme A carboxylase carboxyl transferase subunit alpha (315 aa).

The region spanning 38-292 is the CoA carboxyltransferase C-terminal domain; that stretch reads RLQKKSNELT…KLRLKEDLAE (255 aa).

This sequence belongs to the AccA family. Acetyl-CoA carboxylase is a heterohexamer composed of biotin carboxyl carrier protein (AccB), biotin carboxylase (AccC) and two subunits each of ACCase subunit alpha (AccA) and ACCase subunit beta (AccD).

The protein resides in the cytoplasm. It catalyses the reaction N(6)-carboxybiotinyl-L-lysyl-[protein] + acetyl-CoA = N(6)-biotinyl-L-lysyl-[protein] + malonyl-CoA. It participates in lipid metabolism; malonyl-CoA biosynthesis; malonyl-CoA from acetyl-CoA: step 1/1. In terms of biological role, component of the acetyl coenzyme A carboxylase (ACC) complex. First, biotin carboxylase catalyzes the carboxylation of biotin on its carrier protein (BCCP) and then the CO(2) group is transferred by the carboxyltransferase to acetyl-CoA to form malonyl-CoA. This is Acetyl-coenzyme A carboxylase carboxyl transferase subunit alpha from Haemophilus influenzae (strain 86-028NP).